Consider the following 242-residue polypeptide: UPF0309 protein BOV_A0853 (242 aa).

An SIS domain is found at 30 to 209; that stretch reads AADLIAAAAR…FADVAARLVG (180 aa).

This sequence belongs to the UPF0309 family.

The chain is UPF0309 protein BOV_A0853 from Brucella ovis (strain ATCC 25840 / 63/290 / NCTC 10512).